The chain runs to 206 residues: uncharacterized protein (206 aa).

Residues 81–132 (EEQQQQQHHVHGPGCSHGHHHDSHANDGHHDEHHDEHHDHVNPDDVEDEFPR) form a disordered region. Over residues 82–96 (EQQQQQHHVHGPGCS) the composition is skewed to low complexity. The span at 103–123 (SHANDGHHDEHHDEHHDHVNP) shows a compositional bias: basic and acidic residues. The helical transmembrane segment at 150-166 (YLTALCLLPIIGSLFSI) threads the bilayer.

The protein resides in the membrane. This is an uncharacterized protein from Dictyostelium discoideum (Social amoeba).